We begin with the raw amino-acid sequence, 1371 residues long: uncharacterized protein (1371 aa).

Residues 1020 to 1048 (WYLSSSKNTPEPRPDPEPTPEGHDNNLRP) are disordered. Positions 1029–1046 (PEPRPDPEPTPEGHDNNL) are enriched in basic and acidic residues. The Autotransporter domain occupies 1083 to 1371 (GEPKATSMWM…SAMLGVKYTF (289 aa)).

It localises to the cell outer membrane. This is an uncharacterized protein from Escherichia coli (strain K12).